The sequence spans 484 residues: 3-isopropylmalate dehydratase large subunit (484 aa).

Positions 352, 412, and 415 each coordinate [4Fe-4S] cluster. Positions 463–484 (TLSSPSDLDPAPASAAIRTDAA) are disordered. The span at 464–478 (LSSPSDLDPAPASAA) shows a compositional bias: low complexity.

This sequence belongs to the aconitase/IPM isomerase family. LeuC type 1 subfamily. As to quaternary structure, heterodimer of LeuC and LeuD. The cofactor is [4Fe-4S] cluster.

It catalyses the reaction (2R,3S)-3-isopropylmalate = (2S)-2-isopropylmalate. It participates in amino-acid biosynthesis; L-leucine biosynthesis; L-leucine from 3-methyl-2-oxobutanoate: step 2/4. In terms of biological role, catalyzes the isomerization between 2-isopropylmalate and 3-isopropylmalate, via the formation of 2-isopropylmaleate. This chain is 3-isopropylmalate dehydratase large subunit, found in Pseudarthrobacter chlorophenolicus (strain ATCC 700700 / DSM 12829 / CIP 107037 / JCM 12360 / KCTC 9906 / NCIMB 13794 / A6) (Arthrobacter chlorophenolicus).